A 96-amino-acid polypeptide reads, in one-letter code: Co-chaperonin GroES (96 aa).

It belongs to the GroES chaperonin family. In terms of assembly, heptamer of 7 subunits arranged in a ring. Interacts with the chaperonin GroEL.

The protein resides in the cytoplasm. Functionally, together with the chaperonin GroEL, plays an essential role in assisting protein folding. The GroEL-GroES system forms a nano-cage that allows encapsulation of the non-native substrate proteins and provides a physical environment optimized to promote and accelerate protein folding. GroES binds to the apical surface of the GroEL ring, thereby capping the opening of the GroEL channel. This chain is Co-chaperonin GroES, found in Legionella micdadei (Tatlockia micdadei).